The primary structure comprises 105 residues: MSVAAVFRGLRPSPELLLLGLLFLPAVVAVTSAGPEESDGDLSCVCVKTISSGIHLKHITSLEVIKAGRHCAVPQLIATLKNGRKICLDRQAPLYKKVIKKILES.

The N-terminal stretch at 1–29 (MSVAAVFRGLRPSPELLLLGLLFLPAVVA) is a signal peptide. O-linked (GalNAc...) threonine glycosylation is present at Thr-31. Intrachain disulfides connect Cys-44/Cys-71 and Cys-46/Cys-87. Ser-61 carries the post-translational modification Phosphoserine. Position 96–102 (96–102 (KKVIKKI)) interacts with heparin.

This sequence belongs to the intercrine alpha (chemokine CxC) family. As to quaternary structure, homotetramer. Interacts with TNFAIP6 (via Link domain). Interacts with CCR1. Interacts with CXCR3. Interacts with THBD; this interaction enhances generation of activated protein C.

The protein localises to the secreted. Chemokine released during platelet aggregation that plays a role in different biological processes including hematopoiesis, cell proliferation, differentiation, and activation. Acts via different functional receptors including CCR1, CXCR3A or CXCR3B. Upon interaction with CXCR3A receptor, induces activated T-lymphocytes migration mediated via downstream Ras/extracellular signal-regulated kinase (ERK) signaling. Neutralizes the anticoagulant effect of heparin by binding more strongly to heparin than to the chondroitin-4-sulfate chains of the carrier molecule. Plays a role in the inhibition of hematopoiesis and in the maintenance of hematopoietic stem cell (HSC) quiescence. Chemotactic for neutrophils and monocytes via CCR1. Inhibits endothelial cell proliferation. In cooperation with toll-like receptor 8/TLR8, induces chromatin remodeling and activates inflammatory gene expression via the TBK1-IRF5 axis. In addition, induces myofibroblast differentiation and collagen synthesis in different precursor cells, including endothelial cells, by stimulating endothelial-to-mesenchymal transition. Interacts with thrombomodulin/THBD to enhance the activation of protein C and thus potentiates its anticoagulant activity. This Mus musculus (Mouse) protein is Platelet factor 4 (Pf4).